We begin with the raw amino-acid sequence, 345 residues long: Tetraacyldisaccharide 4'-kinase (345 aa).

54–61 (TLGGAGKT) serves as a coordination point for ATP.

Belongs to the LpxK family.

The enzyme catalyses a lipid A disaccharide + ATP = a lipid IVA + ADP + H(+). Its pathway is glycolipid biosynthesis; lipid IV(A) biosynthesis; lipid IV(A) from (3R)-3-hydroxytetradecanoyl-[acyl-carrier-protein] and UDP-N-acetyl-alpha-D-glucosamine: step 6/6. Its function is as follows. Transfers the gamma-phosphate of ATP to the 4'-position of a tetraacyldisaccharide 1-phosphate intermediate (termed DS-1-P) to form tetraacyldisaccharide 1,4'-bis-phosphate (lipid IVA). This is Tetraacyldisaccharide 4'-kinase from Allorhizobium ampelinum (strain ATCC BAA-846 / DSM 112012 / S4) (Agrobacterium vitis (strain S4)).